Reading from the N-terminus, the 267-residue chain is Auxin-responsive protein IAA18 (267 aa).

The short motif at 42 to 46 is the EAR-like (transcriptional repression) element; sequence LELKL. The interval 81 to 101 is disordered; that stretch reads PSSTKTTSHKRTAPGPVVGWP. A PB1 domain is found at 149–248; that stretch reads GMFVKINMYG…SVKRLRVIKT (100 aa).

The protein belongs to the Aux/IAA family. As to quaternary structure, homodimers and heterodimers. Interacts with TPL.

It is found in the nucleus. Its function is as follows. Aux/IAA proteins are short-lived transcriptional factors that function as repressors of early auxin response genes at low auxin concentrations. Repression is thought to result from the interaction with auxin response factors (ARFs), proteins that bind to the auxin-responsive promoter element (AuxRE). Formation of heterodimers with ARF proteins may alter their ability to modulate early auxin response genes expression. This is Auxin-responsive protein IAA18 (IAA18) from Arabidopsis thaliana (Mouse-ear cress).